The following is a 328-amino-acid chain: DNA-directed RNA polymerase subunit alpha (328 aa).

The tract at residues 1 to 230 (MIQITGRKFK…IILDHFMFIE (230 aa)) is alpha N-terminal domain (alpha-NTD). The tract at residues 257 to 328 (PEDVMSKKVE…FGLSLRKGDK (72 aa)) is alpha C-terminal domain (alpha-CTD).

The protein belongs to the RNA polymerase alpha chain family. Homodimer. The RNAP catalytic core consists of 2 alpha, 1 beta, 1 beta' and 1 omega subunit. When a sigma factor is associated with the core the holoenzyme is formed, which can initiate transcription.

It carries out the reaction RNA(n) + a ribonucleoside 5'-triphosphate = RNA(n+1) + diphosphate. In terms of biological role, DNA-dependent RNA polymerase catalyzes the transcription of DNA into RNA using the four ribonucleoside triphosphates as substrates. The polypeptide is DNA-directed RNA polymerase subunit alpha (Fervidobacterium nodosum (strain ATCC 35602 / DSM 5306 / Rt17-B1)).